A 532-amino-acid polypeptide reads, in one-letter code: Protein DETOXIFICATION 51 (532 aa).

The next 12 helical transmembrane spans lie at Phe-65 to Leu-85, Leu-98 to Met-118, Val-142 to Ile-162, Ala-176 to Ile-196, Pro-208 to Val-228, Val-238 to Trp-258, Val-290 to Val-310, Val-316 to Leu-336, Leu-358 to Ala-378, Ile-395 to Pro-415, Ala-439 to Phe-459, and Gly-461 to Val-481.

It belongs to the multi antimicrobial extrusion (MATE) (TC 2.A.66.1) family. As to expression, expressed in the meristematic regions. Mainly detected in tissues where cells were actively dividing, such as leaf primordia and young leaves, the junction between lateral root and the primary root, root cap, hydathodes, the junction between secondary inflorescence and the main inflorescence, young stamen and young siliques. Highly expressed at the junction between the hypocotyl and the root, and at the marginal areas of cotyledons and true leaves, coinciding with the locations of the hydathode. Also highly expressed at the basal regions of the newly emerged lateral roots. In the floral organs, mostly expressed at the style of the pistil.

It localises to the endosome membrane. It is found in the late endosome membrane. Functionally, functions as a multidrug and toxin extrusion transporter that negatively regulates plant disease resistance. Plays an important role in maintaining normal plant architecture, possibly by regulating local auxin biosynthesis. May act as a negative regulator of hypocotyl cell elongation in the light. In Arabidopsis thaliana (Mouse-ear cress), this protein is Protein DETOXIFICATION 51.